The following is a 111-amino-acid chain: Ribonuclease P protein component (111 aa).

This sequence belongs to the RnpA family. Consists of a catalytic RNA component (M1 or rnpB) and a protein subunit.

The enzyme catalyses Endonucleolytic cleavage of RNA, removing 5'-extranucleotides from tRNA precursor.. RNaseP catalyzes the removal of the 5'-leader sequence from pre-tRNA to produce the mature 5'-terminus. It can also cleave other RNA substrates such as 4.5S RNA. The protein component plays an auxiliary but essential role in vivo by binding to the 5'-leader sequence and broadening the substrate specificity of the ribozyme. The chain is Ribonuclease P protein component from Streptococcus thermophilus (strain CNRZ 1066).